The following is a 480-amino-acid chain: Probable pectin lyase F-2 (480 aa).

The first 25 residues, 1–25 (MTLIRTVLMAAALLGASAHAQGVVG), serve as a signal peptide directing secretion. Residues C83 and C106 are joined by a disulfide bond. Residue N111 is glycosylated (N-linked (GlcNAc...) asparagine). Residue R256 is part of the active site. An intrachain disulfide couples C322 to C330. Residues 386 to 401 (SSSAIPSSTPAPSSSA) show a composition bias toward low complexity. The segment at 386-436 (SSSAIPSSTPAPSSSALAKRHGGHDRHGLGHIPHLTEGGPGAWHTPGPAPS) is disordered.

This sequence belongs to the polysaccharide lyase 1 family.

It localises to the secreted. The enzyme catalyses Eliminative cleavage of (1-&gt;4)-alpha-D-galacturonan methyl ester to give oligosaccharides with 4-deoxy-6-O-methyl-alpha-D-galact-4-enuronosyl groups at their non-reducing ends.. Its function is as follows. Pectinolytic enzymes consist of four classes of enzymes: pectin lyase, polygalacturonase, pectin methylesterase and rhamnogalacturonase. Among pectinolytic enzymes, pectin lyase is the most important in depolymerization of pectin, since it cleaves internal glycosidic bonds of highly methylated pectins. The protein is Probable pectin lyase F-2 (pelF-2) of Aspergillus terreus (strain NIH 2624 / FGSC A1156).